Here is a 514-residue protein sequence, read N- to C-terminus: Glutathione-binding protein GsiB (514 aa).

Residues 1 to 26 (MARAVHRSGLVALGIATALMASCAFA) form the signal peptide.

It belongs to the bacterial solute-binding protein 5 family. As to quaternary structure, the complex is composed of two ATP-binding proteins (GsiA), two transmembrane proteins (GsiC and GsiD) and a solute-binding protein (GsiB).

The protein resides in the periplasm. Part of the ABC transporter complex GsiABCD involved in glutathione import. Binds glutathione. The polypeptide is Glutathione-binding protein GsiB (Shigella flexneri serotype 5b (strain 8401)).